Consider the following 67-residue polypeptide: ATP synthase subunit c (67 aa).

A run of 2 helical transmembrane segments spans residues 6-26 (ILAL…LVAN) and 46-66 (IMGV…TFFV).

Belongs to the ATPase C chain family. In terms of assembly, F-type ATPases have 2 components, F(1) - the catalytic core - and F(0) - the membrane proton channel. F(1) has five subunits: alpha(3), beta(3), gamma(1), delta(1), epsilon(1). F(0) has three main subunits: a(1), b(2) and c(10-14). The alpha and beta chains form an alternating ring which encloses part of the gamma chain. F(1) is attached to F(0) by a central stalk formed by the gamma and epsilon chains, while a peripheral stalk is formed by the delta and b chains.

It is found in the cell membrane. F(1)F(0) ATP synthase produces ATP from ADP in the presence of a proton or sodium gradient. F-type ATPases consist of two structural domains, F(1) containing the extramembraneous catalytic core and F(0) containing the membrane proton channel, linked together by a central stalk and a peripheral stalk. During catalysis, ATP synthesis in the catalytic domain of F(1) is coupled via a rotary mechanism of the central stalk subunits to proton translocation. In terms of biological role, key component of the F(0) channel; it plays a direct role in translocation across the membrane. A homomeric c-ring of between 10-14 subunits forms the central stalk rotor element with the F(1) delta and epsilon subunits. The chain is ATP synthase subunit c from Streptococcus mutans serotype c (strain ATCC 700610 / UA159).